Reading from the N-terminus, the 500-residue chain is Lysine--tRNA ligase (500 aa).

Glu-410 and Glu-417 together coordinate Mg(2+).

The protein belongs to the class-II aminoacyl-tRNA synthetase family. Homodimer. The cofactor is Mg(2+).

It localises to the cytoplasm. The catalysed reaction is tRNA(Lys) + L-lysine + ATP = L-lysyl-tRNA(Lys) + AMP + diphosphate. This Pseudomonas savastanoi pv. phaseolicola (strain 1448A / Race 6) (Pseudomonas syringae pv. phaseolicola (strain 1448A / Race 6)) protein is Lysine--tRNA ligase.